Reading from the N-terminus, the 397-residue chain is Serpin B10 (397 aa).

Residues lysine 74–lysine 77 carry the Nuclear localization signal motif.

The protein belongs to the serpin family. Ov-serpin subfamily.

The protein localises to the nucleus. It localises to the cytoplasm. Protease inhibitor that may play a role in the regulation of protease activities during hematopoiesis and apoptosis induced by TNF. May regulate protease activities in the cytoplasm and in the nucleus. This chain is Serpin B10 (SERPINB10), found in Bos taurus (Bovine).